Here is a 1574-residue protein sequence, read N- to C-terminus: Centrosomal protein of 170 kDa protein B (1574 aa).

The FHA domain occupies Ile-23 to Ile-73. Disordered regions lie at residues Val-121–Gly-258, Asp-316–Gln-395, and Phe-409–Glu-578. Basic and acidic residues-rich tracts occupy residues Arg-147 to Ala-157, Ser-182 to Asp-197, and Leu-325 to Val-344. Phosphoserine is present on Ser-360. Positions Ala-370–Glu-382 are enriched in low complexity. Phosphoserine is present on Ser-421. Residues Pro-430–Pro-446 are compositionally biased toward basic and acidic residues. Positions Ala-452–Ser-463 are enriched in polar residues. Residues Leu-465–Leu-474 show a composition bias toward basic and acidic residues. Residues Gly-475–Phe-488 show a composition bias toward polar residues. 2 positions are modified to phosphoserine: Ser-478 and Ser-490. Pro residues predominate over residues Glu-518–Leu-528. Ser-534 is modified (phosphoserine). A phosphothreonine mark is found at Thr-540 and Thr-541. Ser-595, Ser-617, Ser-653, Ser-709, Ser-744, Ser-746, Ser-749, Ser-751, Ser-819, and Ser-843 each carry phosphoserine. Disordered regions lie at residues Pro-637 to Leu-826, Arg-839 to Ser-882, Ser-924 to Gly-1300, Ala-1333 to Ala-1358, Asn-1377 to Thr-1407, and Asn-1510 to Ala-1535. Over residues Phe-857–Pro-867 the composition is skewed to polar residues. Ser-947 is modified (phosphoserine). Positions Asp-950–Ser-959 are enriched in polar residues. Ser-965 and Ser-981 each carry phosphoserine. Basic and acidic residues predominate over residues Ala-996–His-1005. Residues Arg-1084–Leu-1102 are compositionally biased toward polar residues. The residue at position 1122 (Ser-1122) is a Phosphoserine. Over residues Ala-1134–Glu-1146 the composition is skewed to low complexity. 2 positions are modified to phosphoserine: Ser-1166 and Ser-1186. The segment covering Ala-1199–Ala-1213 has biased composition (low complexity). Positions His-1265–Arg-1282 are enriched in polar residues. Thr-1289 carries the post-translational modification Phosphothreonine. Phosphoserine is present on Ser-1341. 2 stretches are compositionally biased toward polar residues: residues Pro-1344–Ala-1358 and Ser-1385–Asn-1396. Position 1345 is a phosphothreonine (Thr-1345). Ser-1347 carries the post-translational modification Phosphoserine. A phosphoserine mark is found at Ser-1530 and Ser-1533.

Belongs to the CEP170 family.

It is found in the cytoplasm. The protein resides in the cytoskeleton. Plays a role in microtubule organization. This is Centrosomal protein of 170 kDa protein B (Cep170b) from Mus musculus (Mouse).